Reading from the N-terminus, the 205-residue chain is N-(5'-phosphoribosyl)anthranilate isomerase (205 aa).

This sequence belongs to the TrpF family.

The enzyme catalyses N-(5-phospho-beta-D-ribosyl)anthranilate = 1-(2-carboxyphenylamino)-1-deoxy-D-ribulose 5-phosphate. The protein operates within amino-acid biosynthesis; L-tryptophan biosynthesis; L-tryptophan from chorismate: step 3/5. In Trichlorobacter lovleyi (strain ATCC BAA-1151 / DSM 17278 / SZ) (Geobacter lovleyi), this protein is N-(5'-phosphoribosyl)anthranilate isomerase.